Consider the following 245-residue polypeptide: Purine nucleoside phosphorylase (245 aa).

A purine D-ribonucleoside is bound at residue His7. Phosphate-binding positions include 23-27, Arg45, and 88-91; these read GDPGR and RAGS. 183 to 184 is a binding site for a purine D-ribonucleoside; sequence ME. Catalysis depends on Asp206, which acts as the Proton donor.

The protein belongs to the PNP/MTAP phosphorylase family. In terms of assembly, homohexamer; trimer of homodimers.

It carries out the reaction inosine + phosphate = alpha-D-ribose 1-phosphate + hypoxanthine. The catalysed reaction is guanosine + phosphate = alpha-D-ribose 1-phosphate + guanine. The enzyme catalyses 2'-deoxyguanosine + phosphate = 2-deoxy-alpha-D-ribose 1-phosphate + guanine. It catalyses the reaction 2'-deoxyinosine + phosphate = 2-deoxy-alpha-D-ribose 1-phosphate + hypoxanthine. It carries out the reaction S-methyl-5'-thioinosine + phosphate = 5-(methylsulfanyl)-alpha-D-ribose 1-phosphate + hypoxanthine. It functions in the pathway purine metabolism; purine nucleoside salvage. Its activity is regulated as follows. Inhibited by Immucillin-H and 5'-methylthio-Immucillin-H. Inhibited by 5'-deaza-1'-aza-2c-deoxy-1'-(9-methylene)-Immucilin-G (DADMe-ImmG). In terms of biological role, as part of the purine salvage pathway, catalyzes the phosphorolytic breakdown of the N-glycosidic bond in the beta-(deoxy)ribonucleoside molecules, with the formation of the corresponding free purine bases and pentose-1-phosphate. Preferentially acts on inosine and guanosine, and to a lesser extent on 2'-deoxyguanosine and guanosine. Also catalyzes the phosphorylation of S-methyl-5'-thioinosine (MTI) to hypoxanthine; MTI is produced by adenosine deaminase (ADA)-mediated breakdown of S-methyl-5'-thioadenosine (MTA), a major by-product of polyamine biosynthesis. Generates hypoxanthine from both the purine salvage pathway and from polyamine metabolism which is required for nucleic acids synthesis. Has no activity towards adenosine. The sequence is that of Purine nucleoside phosphorylase from Plasmodium falciparum (isolate 3D7).